Reading from the N-terminus, the 242-residue chain is Probable 2-phosphosulfolactate phosphatase (242 aa).

Belongs to the ComB family. Mg(2+) is required as a cofactor.

It carries out the reaction (2R)-O-phospho-3-sulfolactate + H2O = (2R)-3-sulfolactate + phosphate. The polypeptide is Probable 2-phosphosulfolactate phosphatase (Synechococcus sp. (strain JA-2-3B'a(2-13)) (Cyanobacteria bacterium Yellowstone B-Prime)).